We begin with the raw amino-acid sequence, 1375 residues long: DNA-directed RNA polymerase subunit beta (1375 aa).

Belongs to the RNA polymerase beta chain family. In terms of assembly, the RNAP catalytic core consists of 2 alpha, 1 beta, 1 beta' and 1 omega subunit. When a sigma factor is associated with the core the holoenzyme is formed, which can initiate transcription.

It catalyses the reaction RNA(n) + a ribonucleoside 5'-triphosphate = RNA(n+1) + diphosphate. Its function is as follows. DNA-dependent RNA polymerase catalyzes the transcription of DNA into RNA using the four ribonucleoside triphosphates as substrates. This Campylobacter jejuni subsp. jejuni serotype O:6 (strain 81116 / NCTC 11828) protein is DNA-directed RNA polymerase subunit beta.